Here is a 304-residue protein sequence, read N- to C-terminus: Protease HtpX homolog (304 aa).

The next 2 membrane-spanning stretches (helical) occupy residues 19–39 (FIVF…VSYF) and 41–61 (LGEI…YYAY). Histidine 146 is a Zn(2+) binding site. Residue glutamate 147 is part of the active site. Histidine 150 contacts Zn(2+). 2 consecutive transmembrane segments (helical) span residues 156–176 (VRLQ…GDGL) and 192–212 (NILG…ATLL). Glutamate 221 lines the Zn(2+) pocket.

This sequence belongs to the peptidase M48B family. It depends on Zn(2+) as a cofactor.

It is found in the cell inner membrane. This is Protease HtpX homolog from Dictyoglomus turgidum (strain DSM 6724 / Z-1310).